The chain runs to 416 residues: Serine hydroxymethyltransferase (416 aa).

(6S)-5,6,7,8-tetrahydrofolate contacts are provided by residues Leu121 and 125–127 (GHL). Lys229 is modified (N6-(pyridoxal phosphate)lysine).

It belongs to the SHMT family. Homodimer. It depends on pyridoxal 5'-phosphate as a cofactor.

It is found in the cytoplasm. It carries out the reaction (6R)-5,10-methylene-5,6,7,8-tetrahydrofolate + glycine + H2O = (6S)-5,6,7,8-tetrahydrofolate + L-serine. Its pathway is one-carbon metabolism; tetrahydrofolate interconversion. It functions in the pathway amino-acid biosynthesis; glycine biosynthesis; glycine from L-serine: step 1/1. Catalyzes the reversible interconversion of serine and glycine with tetrahydrofolate (THF) serving as the one-carbon carrier. This reaction serves as the major source of one-carbon groups required for the biosynthesis of purines, thymidylate, methionine, and other important biomolecules. Also exhibits THF-independent aldolase activity toward beta-hydroxyamino acids, producing glycine and aldehydes, via a retro-aldol mechanism. This Neisseria meningitidis serogroup A / serotype 4A (strain DSM 15465 / Z2491) protein is Serine hydroxymethyltransferase.